Reading from the N-terminus, the 342-residue chain is Ribosomal RNA small subunit methyltransferase C (342 aa).

It belongs to the methyltransferase superfamily. RsmC family. As to quaternary structure, monomer.

It is found in the cytoplasm. It catalyses the reaction guanosine(1207) in 16S rRNA + S-adenosyl-L-methionine = N(2)-methylguanosine(1207) in 16S rRNA + S-adenosyl-L-homocysteine + H(+). Its function is as follows. Specifically methylates the guanine in position 1207 of 16S rRNA in the 30S particle. The polypeptide is Ribosomal RNA small subunit methyltransferase C (Cronobacter sakazakii (strain ATCC BAA-894) (Enterobacter sakazakii)).